Reading from the N-terminus, the 274-residue chain is Large ribosomal subunit protein uL2 (274 aa).

Residues 223–274 (VAMNPVDHPHGGGEGRTSGGRHPVTPWGVPTKGYKTRSNKRTDKYIVRRRTK) are disordered.

The protein belongs to the universal ribosomal protein uL2 family. In terms of assembly, part of the 50S ribosomal subunit. Forms a bridge to the 30S subunit in the 70S ribosome.

One of the primary rRNA binding proteins. Required for association of the 30S and 50S subunits to form the 70S ribosome, for tRNA binding and peptide bond formation. It has been suggested to have peptidyltransferase activity; this is somewhat controversial. Makes several contacts with the 16S rRNA in the 70S ribosome. The sequence is that of Large ribosomal subunit protein uL2 from Shewanella amazonensis (strain ATCC BAA-1098 / SB2B).